A 568-amino-acid polypeptide reads, in one-letter code: Probable inactive 1-aminocyclopropane-1-carboxylate synthase-like protein 2 (568 aa).

The interval 1–21 (MSHRSDTLPVPSGQRRGRVPR) is disordered. N6-(pyridoxal phosphate)lysine is present on K395.

Belongs to the class-I pyridoxal-phosphate-dependent aminotransferase family.

This Homo sapiens (Human) protein is Probable inactive 1-aminocyclopropane-1-carboxylate synthase-like protein 2 (ACCSL).